Consider the following 619-residue polypeptide: UvrABC system protein C (619 aa).

Residues 20–98 form the GIY-YIG domain; that stretch reads TAPGVYRMYA…IKSLSPRYNV (79 aa). The UVR domain maps to 207-242; the sequence is DQLGEEIMHSMQQASEALEFERAARLRDLLSSLRSM.

Belongs to the UvrC family. In terms of assembly, interacts with UvrB in an incision complex.

It is found in the cytoplasm. Its function is as follows. The UvrABC repair system catalyzes the recognition and processing of DNA lesions. UvrC both incises the 5' and 3' sides of the lesion. The N-terminal half is responsible for the 3' incision and the C-terminal half is responsible for the 5' incision. The sequence is that of UvrABC system protein C from Xanthomonas euvesicatoria pv. vesicatoria (strain 85-10) (Xanthomonas campestris pv. vesicatoria).